Reading from the N-terminus, the 400-residue chain is Phosphoglycerate kinase (400 aa).

Substrate contacts are provided by residues 22 to 24 (DFN), arginine 38, 61 to 64 (HLGR), arginine 119, and arginine 152. ATP is bound by residues lysine 205, glycine 296, glutamate 327, and 353-356 (GGDT).

It belongs to the phosphoglycerate kinase family. As to quaternary structure, monomer.

The protein localises to the cytoplasm. It catalyses the reaction (2R)-3-phosphoglycerate + ATP = (2R)-3-phospho-glyceroyl phosphate + ADP. It functions in the pathway carbohydrate degradation; glycolysis; pyruvate from D-glyceraldehyde 3-phosphate: step 2/5. The sequence is that of Phosphoglycerate kinase from Campylobacter jejuni subsp. jejuni serotype O:23/36 (strain 81-176).